A 187-amino-acid chain; its full sequence is dTTP/UTP pyrophosphatase (187 aa).

The Proton acceptor role is filled by Asp65.

Belongs to the Maf family. YhdE subfamily. It depends on a divalent metal cation as a cofactor.

It is found in the cytoplasm. It catalyses the reaction dTTP + H2O = dTMP + diphosphate + H(+). The enzyme catalyses UTP + H2O = UMP + diphosphate + H(+). Its function is as follows. Nucleoside triphosphate pyrophosphatase that hydrolyzes dTTP and UTP. May have a dual role in cell division arrest and in preventing the incorporation of modified nucleotides into cellular nucleic acids. This chain is dTTP/UTP pyrophosphatase, found in Pyrococcus abyssi (strain GE5 / Orsay).